We begin with the raw amino-acid sequence, 2210 residues long: RNA-directed RNA polymerase L (2210 aa).

The segment at 26-285 (KAIFLSQTKL…KCAIMSEEDS (260 aa)) is endonuclease. The Mn(2+) site is built by Glu51, Asp88, and Glu101. Residue Lys114 is part of the active site. Residues 1163 to 1359 (LDMKSVVRQG…FLSDKLNKFV (197 aa)) form the RdRp catalytic domain. Residue Asp1319 participates in Mg(2+) binding.

This sequence belongs to the Bunyavirales RNA polymerase family. As to quaternary structure, homomultimer; the oligomeric structure is essential for the polymerase activity. Interacts with nucleoprotein N. Interacts with protein Z; this interaction inhibits viral transcription and replication, Z partially blocks the product exit tunnel for the releasing nascent RNA product. Mn(2+) serves as cofactor. Requires Mg(2+) as cofactor.

It localises to the virion. The protein resides in the host cytoplasm. The catalysed reaction is RNA(n) + a ribonucleoside 5'-triphosphate = RNA(n+1) + diphosphate. In terms of biological role, RNA-dependent RNA polymerase, which is responsible for the replication and transcription of the viral RNA genome using antigenomic RNA as an intermediate. During transcription, synthesizes subgenomic RNAs and assures their capping by a cap-snatching mechanism, which involves the endonuclease activity cleaving the host capped pre-mRNAs. These short capped RNAs are then used as primers for viral transcription. The 3'-end of subgenomic mRNAs molecules are heterogeneous and not polyadenylated. The replicase function is to direct synthesis of antigenomic and genomic RNA which are encapsidated and non capped. As a consequence of the use of the same enzyme for both transcription and replication, these mechanisms need to be well coordinated. These processes may be regulated by proteins N and Z in a dose-dependent manner. Z protein inhibits the viral polymerase L und thus the viral transcription and RNA synthesis. The polypeptide is RNA-directed RNA polymerase L (Sigmodon alstoni (PIRV)).